The primary structure comprises 223 residues: Twisted gastrulation protein homolog 1 (223 aa).

Residues 1 to 25 (MKLHYVAVLTLAILMFLTWLPESLS) form the signal peptide. N-linked (GlcNAc...) asparagine glycans are attached at residues asparagine 52 and asparagine 81.

This sequence belongs to the twisted gastrulation protein family. In terms of assembly, interacts with CHRD and BMP4. This interaction enhances CHRD/BMP4 complex formation. Interacts with BMP7.

It localises to the secreted. Its function is as follows. May be involved in dorsoventral axis formation. Seems to antagonize BMP signaling by forming ternary complexes with CHRD and BMPs, thereby preventing BMPs from binding to their receptors. In addition to the anti-BMP function, also has pro-BMP activity, partly mediated by cleavage and degradation of CHRD, which releases BMPs from ternary complexes. May be an important modulator of BMP-regulated cartilage development and chondrocyte differentiation. May play a role in thymocyte development. The chain is Twisted gastrulation protein homolog 1 (TWSG1) from Homo sapiens (Human).